Reading from the N-terminus, the 270-residue chain is Glutamate racemase (270 aa).

Substrate contacts are provided by residues 10–11 (DS) and 42–43 (YG). Cys74 serves as the catalytic Proton donor/acceptor. 75 to 76 (NT) is a substrate binding site. Residue Cys189 is the Proton donor/acceptor of the active site. Position 190–191 (190–191 (TH)) interacts with substrate.

The protein belongs to the aspartate/glutamate racemases family.

The enzyme catalyses L-glutamate = D-glutamate. The protein operates within cell wall biogenesis; peptidoglycan biosynthesis. Its function is as follows. Provides the (R)-glutamate required for cell wall biosynthesis. The polypeptide is Glutamate racemase (Bartonella quintana (strain Toulouse) (Rochalimaea quintana)).